A 543-amino-acid chain; its full sequence is Intermediate filament protein ifb-2 (543 aa).

Positions 1–10 (MSAVSYSMHR) are enriched in polar residues. Positions 1-27 (MSAVSYSMHRTTTTTSSSSHGGVSAGH) are disordered. Residues 1 to 42 (MSAVSYSMHRTTTTTSSSSHGGVSAGHAAEEFVASAEREKQE) are head. The 350-residue stretch at 39-388 (EKQEMQQLNS…KLVESEEGRF (350 aa)) folds into the IF rod domain. The segment at 43 to 74 (MQQLNSRLEVYISRVRQLEDRNKELVIELDTL) is coil 1A. Residues 75–88 (RGSLGNDIGQIKFK) form a linker 1 region. The segment at 89–223 (FNDSLVKVRR…RIHSQEITEL (135 aa)) is coil 1B. The interval 224–240 (RTLLAQAPADTREFFKN) is linker 12. Positions 241 to 387 (ELALAIREIK…RKLVESEEGR (147 aa)) are coil 2. Positions 388-542 (FTHVGQGVVV…SHIQTTVASS (155 aa)) are tail. In terms of domain architecture, LTD spans 420–538 (TRSSFKRHAK…IEKASHIQTT (119 aa)).

It belongs to the intermediate filament family. As to expression, expression is restricted to a discrete circumferential subapical layer within the intestinal terminal web (known as the 'endotube'); this layer joins directly to the apical junction complexes that connect adjacent gut cells.

Its subcellular location is the cytoplasm. In terms of biological role, cytoplasmic intermediate filaments provide mechanical strength to cells. Not essential protein. Component of the terminal web (organelle-depleted, intermediate filament-rich layer of cytoplasm that underlies the apical microvilli of polarized epithelial cells) in embryonic through to adult gut cells. Correct localization of filaments requires let-413. This is Intermediate filament protein ifb-2 (ifb-2) from Caenorhabditis elegans.